We begin with the raw amino-acid sequence, 156 residues long: Ribonuclease H (156 aa).

Residues 7-148 form the RNase H type-1 domain; it reads QDKIVMIATD…ADQLASDAAI (142 aa). 4 residues coordinate Mg(2+): D16, E54, D76, and D140.

It belongs to the RNase H family. Monomer. Requires Mg(2+) as cofactor.

It is found in the cytoplasm. The catalysed reaction is Endonucleolytic cleavage to 5'-phosphomonoester.. Its function is as follows. Endonuclease that specifically degrades the RNA of RNA-DNA hybrids. In Zymomonas mobilis subsp. mobilis (strain ATCC 31821 / ZM4 / CP4), this protein is Ribonuclease H (rnhA).